The following is a 364-amino-acid chain: C2 calcium-dependent domain-containing protein 4A (364 aa).

2 disordered regions span residues 118–175 (GSPS…PPRC) and 192–242 (AGRS…RPER). Polar residues predominate over residues 220-233 (SPGSPTQAPVTSLS). A C2 domain is found at 254–364 (AGGALRLAAE…ELLLGPLLLL (111 aa)).

The protein belongs to the C2CD4 family.

Its subcellular location is the nucleus. Its function is as follows. May be involved in inflammatory process. May regulate cell architecture and adhesion. In Bos taurus (Bovine), this protein is C2 calcium-dependent domain-containing protein 4A (C2CD4A).